Reading from the N-terminus, the 210-residue chain is Large ribosomal subunit protein uL3 (210 aa).

The interval 122 to 155 (NQKRNNFGRGPMSHGSKNHRAPGSIGAGTTPGRV) is disordered.

The protein belongs to the universal ribosomal protein uL3 family. Part of the 50S ribosomal subunit. Forms a cluster with proteins L14 and L19.

Its function is as follows. One of the primary rRNA binding proteins, it binds directly near the 3'-end of the 23S rRNA, where it nucleates assembly of the 50S subunit. This chain is Large ribosomal subunit protein uL3, found in Nostoc punctiforme (strain ATCC 29133 / PCC 73102).